Consider the following 141-residue polypeptide: Guanyl-specific ribonuclease Sa3 (141 aa).

Residues 1 to 36 (MRIPPRLVALAGAAAVAATLIAGPVAAAAPASHAVA) constitute a signal peptide (or 43). The cysteines at positions 52 and 141 are disulfide-linked. Catalysis depends on E99, which acts as the Proton acceptor. The active-site Proton donor is the H130.

This sequence belongs to the ribonuclease N1/T1 family.

Its subcellular location is the secreted. It catalyses the reaction [RNA] containing guanosine + H2O = an [RNA fragment]-3'-guanosine-3'-phosphate + a 5'-hydroxy-ribonucleotide-3'-[RNA fragment].. This chain is Guanyl-specific ribonuclease Sa3 (rnaSA3), found in Kitasatospora aureofaciens (Streptomyces aureofaciens).